The sequence spans 195 residues: Transcriptional regulator GfcR (195 aa).

This sequence belongs to the purine/pyrimidine phosphoribosyltransferase family. GfcR subfamily.

In Picrophilus torridus (strain ATCC 700027 / DSM 9790 / JCM 10055 / NBRC 100828 / KAW 2/3), this protein is Transcriptional regulator GfcR.